Here is a 335-residue protein sequence, read N- to C-terminus: Legumin type B (335 aa).

2 disordered regions span residues 47-87 (PETQ…GNSV) and 102-155 (TEED…GRNG). A compositionally biased stretch (basic and acidic residues) spans 105 to 118 (DTAKRLRSPRDKRN). Positions 135–144 (QQEEEEEEEE) are enriched in acidic residues. Residues 167–314 (ENIAQPARAD…AFGLRQRQVT (148 aa)) enclose the Cupin type-1 domain.

Belongs to the 11S seed storage protein (globulins) family. In terms of assembly, hexamer; each subunit is composed of an acidic and a basic chain derived from a single precursor and linked by a disulfide bond.

In terms of biological role, this protein found in the seeds of many leguminous and non-leguminous plants is the source of sulfur-containing amino acids in seed meals. This Vicia faba (Broad bean) protein is Legumin type B (LEB2).